The chain runs to 411 residues: Immunity-related GTPase family M protein (411 aa).

The interval 1–21 is disordered; it reads MKPSHKSCEAAPLLPKMPETS. Positions 77-253 constitute an IRG-type G domain; sequence IPVSIFVTGD…PELRNTLQTD (177 aa). GTP is bound by residues 86–93, 111–115, and 193–195; these read DSGNGMSS, TGVVR, and KLD. At Ser204 the chain carries Phosphoserine. A GTP-binding site is contributed by 234–236; the sequence is SNL. Lys272 participates in a covalent cross-link: Glycyl lysine isopeptide (Lys-Gly) (interchain with G-Cter in ubiquitin). An alpha-K amphipathic helix region spans residues 352–376; the sequence is KLRLMTCTTVNALFCLFKFLPCLCH.

Belongs to the TRAFAC class dynamin-like GTPase superfamily. IRG family. As to quaternary structure, interacts with ULK1; promoting the coassembly of ULK1 and BECN1. Interacts with BECN1; enhancing BECN1-interacting partners and influencing the composition of the BECN1 complex. Interacts with ATG16L1. Interacts with NOD2; promoting Irgm 'Lys-63'-linked polyubiquitination, which is required for interactions with the core autophagy factors. Interacts with STX17; promoting STX17 recruitment to autophagosomes. Interacts with ATG8 proteins (GABARAP, GABARAPL1, GABARAPL2, MAP1LC3A, MAP1LC3B and MAP1LC3C); promoting STX17 recruitment to autophagosomes. Interacts with TFEB; promoting association between TFEB and PPP3CB and TFEB dephosphorylation. Interacts with PPP3CB; promoting association between TFEB and PPP3CB and TFEB dephosphorylation. Interacts with NLRP3; preventing NLRP3 inflammasome assembly and promoting SQSTM1/p62-dependent autophagic degradation of NLRP3. Interacts with CGAS; promoting SQSTM1/p62-dependent autophagic degradation of CGAS. Interacts with RIGI/RIG-I; promoting SQSTM1/p62-dependent autophagic degradation of RIGI/RIG-I. Interacts with NOD1; promoting SQSTM1/p62-dependent autophagic degradation of RIGI/RIG-I. Interacts with NOD2; promoting SQSTM1/p62-dependent autophagic degradation of RIGI/RIG-I. Interacts with RIPK2; promoting SQSTM1/p62-dependent autophagic degradation of RIGI/RIG-I. Interacts with PIK3CA. Palmitoylated on C-terminal Cys residues. Palmitoylation, together with the alpha-K amphipathic helix, which binds phosphatidylinositol, mediate binding to membranes. In terms of processing, ubiquitinated via 'Lys-63'-linked polyubiquitination in a NOD2-dependent process. 'Lys-63'-linked polyubiquitination is required for interactions with the core autophagy factors. Ubiquitination at Lys-272 by the DCX(WDR77) complex, also named CLR4(WDR77) complex, in intestinal cells, leading to its degradation by the proteasome.

The protein localises to the golgi apparatus membrane. It is found in the cell membrane. It localises to the cytoplasmic vesicle. The protein resides in the phagosome membrane. Its subcellular location is the autophagosome membrane. The protein localises to the lysosome membrane. It is found in the late endosome membrane. It localises to the mitochondrion membrane. The protein resides in the cell projection. Its subcellular location is the phagocytic cup. It catalyses the reaction GTP + H2O = GDP + phosphate + H(+). In terms of biological role, immunity-related GTPase that plays important roles in innate immunity and inflammatory response. Acts as a dynamin-like protein that binds to intracellular membranes and promotes remodeling and trafficking of those membranes. Required for clearance of acute protozoan and bacterial infections by interacting with autophagy and lysosome regulatory proteins, thereby promoting the fusion of phagosomes with lysosomes for efficient degradation of cargo including microbes. Regulates selective autophagy, including xenophagy and mitophagy, both directly and indirectly. Directly regulates autophagy by acting as a molecular adapter that promotes the coassembly of the core autophagy machinery to mediate antimicrobial defense: Irgm (1) activates AMPK, which in turn phosphorylates ULK1 and BECN1 to induce autophagy, (2) promotes the coassembly of ULK1 and BECN1, enhancing BECN1-interacting partners and (3) influences the composition of the BECN1 complex, by competing with the negative regulators BCL2 and RUBCN, to trigger autophagy. Also activates autophagy by promoting recruitment of STX17 to autophagosomes. In collaboration with ATG8 proteins, regulate lysosomal biogenesis, a fundamental process for any autophagic pathway, by promoting TFEB dephosphorylation. Also modulates autophagy by assisting with autophagosome formation and preventing lysosomal deacidification. Regulates autophagy by affecting mitochondrial fusion and fission. Also involved in M1 macrophage activation for the production of proinflammatory cytokines. While activating autophagy, acts as a key negative regulator of the inflammatory and interferon responses both by (1) promoting mitophagy and (2) mediating autophagy-dependent degradation of effectors of the inflammatory response. Promotes degradation of damaged and IFNG/IFN-gamma-stressed mitochondria via mitophagy, preventing cytosolic release of ligands that activate inflammation. Negatively regulates interferon-signaling in hematopoietic stem cells, preserving hematopoietic stem cell number and function. Promotes expansion of activated CD4(+) T-cells by inhibiting IFNG/IFN-gamma signaling, thereby preventing Ifng-mediated cell death of CD4(+) T-cells. Acts as a suppressor of inflammation by promoting recruitment of inflammation effectors, such as CGAS, RIGI/RIG-I and NLRP3, to autophagosome membranes, leading to their SQSTM1/p62-dependent autophagic degradation. Also directly inhibits assembly of the NLRP3 inflammasome by preventing the association between NLRP3 and PYCARD. Acts as a negative regulator of antiviral innate immune response by suppressing the RIPK2-dependent pro-inflammatory response: mediates recruitment of RIPosomes, composed of RIPK2 and NOD1 or NOD2, to autophagosome membranes, promoting their SQSTM1/p62-dependent autophagic degradation. This is Immunity-related GTPase family M protein from Rattus norvegicus (Rat).